A 382-amino-acid polypeptide reads, in one-letter code: Gap junction alpha-1 protein (382 aa).

At 2–23 (GDWSALGKLLDKVQAYSTAGGK) the chain is on the cytoplasmic side. The residue at position 5 (serine 5) is a Phosphoserine. A helical transmembrane segment spans residues 24-44 (VWLSVLFIFRILLLGTAVESA). Residues 45–76 (WGDEQSAFRCNTQQPGCENVCYDKSFPISHVR) lie on the Extracellular side of the membrane. Intrachain disulfides connect cysteine 54-cysteine 192 and cysteine 187-cysteine 198. A helical transmembrane segment spans residues 77 to 97 (FWVLQIIFVSVPTLLYLAHVF). Over 98–155 (YVMRKEEKLNKKEEELKVAQTDGVNVEMHLKQIEIKKFKYGIEEHGKVKMRGGLLRTY) the chain is Cytoplasmic. Residue lysine 144 forms a Glycyl lysine isopeptide (Lys-Gly) (interchain with G-Cter in SUMO) linkage. The chain crosses the membrane as a helical span at residues 156-176 (IISILFKSIFEVAFLLIQWYI). The Extracellular portion of the chain corresponds to 177–207 (YGFSLSAVYTCKRDPCPHQVDCFLSRPTEKT). A helical transmembrane segment spans residues 208–228 (IFIIFMLVVSLVSLALNIIEL). The Cytoplasmic portion of the chain corresponds to 229–382 (FYVFFKGVKD…SRPRPDDLEI (154 aa)). Residue lysine 237 forms a Glycyl lysine isopeptide (Lys-Gly) (interchain with G-Cter in SUMO) linkage. Residues 244–382 (SDPYHATSGA…SRPRPDDLEI (139 aa)) form an interaction with NOV region. Residue tyrosine 247 is modified to Phosphotyrosine. Phosphoserine occurs at positions 255 and 262. The interaction with UBQLN4 stretch occupies residues 264 to 382 (KYAYFNGCSS…SRPRPDDLEI (119 aa)). Cysteine 271 carries the post-translational modification S-nitrosocysteine. Threonine 275 carries the post-translational modification Phosphothreonine. Positions 279-300 (SPMSPPGYKPVTGDRNNSSCRN) are disordered. Phosphoserine occurs at positions 306 and 314. A compositionally biased stretch (polar residues) spans 317–332 (QNRMGQAGSTISNSHA). The tract at residues 317–382 (QNRMGQAGST…SRPRPDDLEI (66 aa)) is disordered. Position 325 is a phosphoserine; by CK1 (serine 325). Threonine 326 is subject to Phosphothreonine. Serine 328 and serine 330 each carry phosphoserine; by CK1. Residues serine 344 and serine 365 each carry the phosphoserine modification. Over residues 362–374 (RPSSRASSRASSR) the composition is skewed to low complexity. Residue serine 368 is modified to Phosphoserine; by PKC/PRKCG and PKC/PRKCD. Residues serine 369 and serine 373 each carry the phosphoserine modification.

This sequence belongs to the connexin family. Alpha-type (group II) subfamily. As to quaternary structure, a connexon is composed of a hexamer of connexins. Interacts with SGSM3. Interacts with RIC1/CIP150. Interacts with CNST and CSNK1D. Interacts (via C-terminus) with TJP1. Interacts (via C-terminus) with SRC (via SH3 domain). Interacts (not ubiquitinated) with UBQLN4 (via UBA domain). Interacts with NOV. Interacts with TMEM65. Interacts with ANK3/ANKG and PKP2. Post-translationally, phosphorylation at Ser-325, Ser-328 and Ser-330 by CK1 modulates gap junction assembly. Phosphorylated at Ser-368 by PRKCG; phosphorylation induces disassembly of gap junction plaques and inhibition of gap junction activity. Phosphorylation at Ser-368 by PRKCD triggers its internalization into small vesicles leading to proteasome-mediated degradation. In terms of processing, sumoylated with SUMO1, SUMO2 and SUMO3, which may regulate the level of functional Cx43 gap junctions at the plasma membrane. May be desumoylated by SENP1 or SENP2. S-nitrosylation at Cys-271 is enriched at the muscle endothelial gap junction in arteries, it augments channel permeability and may regulate of smooth muscle cell to endothelial cell communication. Post-translationally, acetylated in the developing cortex; leading to delocalization from the cell membrane.

It localises to the cell membrane. The protein resides in the cell junction. Its subcellular location is the gap junction. The protein localises to the endoplasmic reticulum. Functionally, gap junction protein that acts as a regulator of bladder capacity. A gap junction consists of a cluster of closely packed pairs of transmembrane channels, the connexons, through which materials of low MW diffuse from one cell to a neighboring cell. May play a critical role in the physiology of hearing by participating in the recycling of potassium to the cochlear endolymph. Negative regulator of bladder functional capacity: acts by enhancing intercellular electrical and chemical transmission, thus sensitizing bladder muscles to cholinergic neural stimuli and causing them to contract. May play a role in cell growth inhibition through the regulation of NOV expression and localization. Plays an essential role in gap junction communication in the ventricles. The sequence is that of Gap junction alpha-1 protein (GJA1) from Macaca fascicularis (Crab-eating macaque).